A 612-amino-acid chain; its full sequence is Dihydroxy-acid dehydratase (612 aa).

Residue D81 coordinates Mg(2+). C122 contributes to the [2Fe-2S] cluster binding site. Mg(2+)-binding residues include D123 and K124. N6-carboxylysine is present on K124. C196 contacts [2Fe-2S] cluster. E492 contacts Mg(2+). S518 (proton acceptor) is an active-site residue.

The protein belongs to the IlvD/Edd family. In terms of assembly, homodimer. [2Fe-2S] cluster is required as a cofactor. Requires Mg(2+) as cofactor.

It carries out the reaction (2R)-2,3-dihydroxy-3-methylbutanoate = 3-methyl-2-oxobutanoate + H2O. The enzyme catalyses (2R,3R)-2,3-dihydroxy-3-methylpentanoate = (S)-3-methyl-2-oxopentanoate + H2O. It functions in the pathway amino-acid biosynthesis; L-isoleucine biosynthesis; L-isoleucine from 2-oxobutanoate: step 3/4. The protein operates within amino-acid biosynthesis; L-valine biosynthesis; L-valine from pyruvate: step 3/4. Its function is as follows. Functions in the biosynthesis of branched-chain amino acids. Catalyzes the dehydration of (2R,3R)-2,3-dihydroxy-3-methylpentanoate (2,3-dihydroxy-3-methylvalerate) into 2-oxo-3-methylpentanoate (2-oxo-3-methylvalerate) and of (2R)-2,3-dihydroxy-3-methylbutanoate (2,3-dihydroxyisovalerate) into 2-oxo-3-methylbutanoate (2-oxoisovalerate), the penultimate precursor to L-isoleucine and L-valine, respectively. This is Dihydroxy-acid dehydratase from Paracoccus denitrificans (strain Pd 1222).